Reading from the N-terminus, the 225-residue chain is UPF0758 protein Ssed_0385 (225 aa).

The region spanning Ile-102–Ile-224 is the MPN domain. Positions 173, 175, and 186 each coordinate Zn(2+). Positions His-173–Asp-186 match the JAMM motif motif.

It belongs to the UPF0758 family.

This is UPF0758 protein Ssed_0385 from Shewanella sediminis (strain HAW-EB3).